The following is a 369-amino-acid chain: Serine/threonine-protein kinase srb10 (369 aa).

In terms of domain architecture, Protein kinase spans 5-319; that stretch reads YKIIGFISSG…AKQALEHVFF (315 aa). ATP contacts are provided by residues 11–19 and Lys-36; that span reads ISSGTYGKV. Catalysis depends on Asp-140, which acts as the Proton acceptor.

Belongs to the protein kinase superfamily. CMGC Ser/Thr protein kinase family. CDC2/CDKX subfamily. Component of the Cdk8 module of the Mediator complex. The Cdk8 module is composed of srb8, srb9, srb10 and srb11. Interacts with med17 and med18.

It localises to the nucleus. It catalyses the reaction L-seryl-[protein] + ATP = O-phospho-L-seryl-[protein] + ADP + H(+). It carries out the reaction L-threonyl-[protein] + ATP = O-phospho-L-threonyl-[protein] + ADP + H(+). The catalysed reaction is [DNA-directed RNA polymerase] + ATP = phospho-[DNA-directed RNA polymerase] + ADP + H(+). Functionally, catalytic component of the Cdk8 module/Srb8-11 module which is a regulatory module of the Mediator complex that regulates basal RNA polymerase II transcription. The Cdk8 module may sterically hinder the interaction between Mediator and RNA polymerase II leading to transcriptional repression of a subset of genes regulated by Mediator. The protein is Serine/threonine-protein kinase srb10 (srb10) of Schizosaccharomyces pombe (strain 972 / ATCC 24843) (Fission yeast).